We begin with the raw amino-acid sequence, 3166 residues long: Intermembrane lipid transfer protein VPS13A (3166 aa).

Residues 3–116 (FESVVVEVLN…LMETKQQELK (114 aa)) enclose the Chorein N-terminal domain. TPR repeat units follow at residues 212–245 (LFAY…ENIV) and 373–406 (LTSK…QQAE). At threonine 831 the chain carries Phosphothreonine. Phosphoserine is present on serine 835. Residues 838 to 844 (EFFDAPC) carry the FFAT motif. The span at 1343 to 1359 (APSSANKDPETMTSGVT) shows a compositional bias: polar residues. Residues 1343-1365 (APSSANKDPETMTSGVTSPPDHS) form a disordered region. Residue serine 1410 is modified to Phosphoserine. TPR repeat units follow at residues 1806–1840 (AIVE…TLSK) and 1999–2034 (ISVF…VPED). In terms of domain architecture, SHR-BD spans 2202-2447 (VAFHSPYWMV…VYYTWADPVG (246 aa)). Required for mitochondrial localization stretches follow at residues 2607 to 3166 (LQPH…SPRL) and 2743 to 3166 (EYEV…SPRL). TPR repeat units lie at residues 2716 to 2750 (ADLV…VSSV) and 2852 to 2890 (ILGL…PEEF). The required for lipid droplet localization stretch occupies residues 2945–3019 (PAGLREGITR…SSTFQGIKRA (75 aa)).

Belongs to the VPS13 family. As to quaternary structure, interacts (via FFAT motif) with VAPA and VAPB. Interacts with RAB7A. Interacts with XK.

The protein resides in the mitochondrion outer membrane. It is found in the endoplasmic reticulum membrane. The protein localises to the endosome membrane. Its subcellular location is the lysosome membrane. It localises to the lipid droplet. The protein resides in the golgi apparatus. It is found in the cytoplasmic vesicle. The protein localises to the secretory vesicle. Its subcellular location is the neuronal dense core vesicle. Mediates the transfer of lipids between membranes at organelle contact sites. Required for the formation or stabilization of ER-mitochondria contact sites which enable transfer of lipids between the ER and mitochondria. Negatively regulates lipid droplet size and motility. Required for efficient lysosomal protein degradation. In Mus musculus (Mouse), this protein is Intermembrane lipid transfer protein VPS13A.